The sequence spans 204 residues: Cell wall protein RHD3 (204 aa).

Positions 1–15 (MKFLAILSLSSSALA) are cleaved as a signal peptide. The GPI-anchor amidated glycine moiety is linked to residue G182. The propeptide at 183-204 (AAGQNKLSYGVGMAAVVAGLVM) is removed in mature form.

It belongs to the SRP1/TIP1 family. Post-translationally, the GPI-anchor is attached to the protein in the endoplasmic reticulum and serves to target the protein to the cell surface. There, the glucosamine-inositol phospholipid moiety is cleaved off and the GPI-modified mannoprotein is covalently attached via its lipidless GPI glycan remnant to the 1,6-beta-glucan of the outer cell wall layer. In terms of processing, O-glycosylated by PMT1.

Its subcellular location is the secreted. The protein resides in the cell wall. The protein localises to the membrane. Its function is as follows. Component of the cell wall involved in virulence. Does not seem to have a major role in maintaining cell wall integrity but plays a role in the relationship between C.albicans and the host. The sequence is that of Cell wall protein RHD3 (RHD3) from Candida albicans (strain SC5314 / ATCC MYA-2876) (Yeast).